The chain runs to 911 residues: MSRFFANGSDSESESSEEEVQAPNFNKASAFQFSDDEEEVKRVVRSTKEKRYENLTSIIKTIRNHKKIKDIPNTLSSFEDLTRAYTKALPVISKEENGITPRFYIRCLAELEDFINEIWEDREGRRNLSKNNTKSLGTLRQKVRKYIKDFEEDLSRFREAPDQESEAEDEEAHVSDAGEAADDSYAGFKKEASVTAPKIAKSAPAKSVPADDEDSDDSIDWDSDSESETESSEDENQYQNMRERFLKRSTEKGEDKGDDDKRKDKRKEQKLKIRKRAEDDEDGEWETVVKGHVVEKPKMFEKDAEIDIPLVLAKLVEIMSARGKKRTDRRLQIDLLFELRDISDQHNLGVPVSVKIHFNIISAIFDYNQKISEPMKMEHWALLLEVMQSMMKLLLANADISISESVAEEHEEYITAPYYIRGCPLAAVERLDDEFTKLLKECDPHSNDYVSRLKDEMNVVKTIELVLQYFEQCGNPNERCRIYLRKIEHLYYKFDPEVLKKKRGELPATTATSVDVMDKLCKFIYAKDDTDRIRTRAILAHIYHHAMHDNWFQARDLVLMSHLQDNIDAADPATRILYNRMMANLGLCAFRQENVKDAHHCLVDLMVTGKPKELLAQGLLPQRQHERSAEQEKIEKQRQMPFHMHINLELLECVYLVSAMLLEIPYIAAHEFDARRRMISKTFYQQLRSSERQSLVGPPESMREHVVAAAKAMRCGNWQACANFIVNKKMNTKVWDLFYESDRVREMLVKFIKEESLRTYLFTYSNVYTSISIPSLAQMYELPVPKVHSIISKMIINEELMASLDDPSETVVMHRSEPSRLQALAMQFVDKVTNLVDVNEKVFDMKQGNFFQRGNMGNRGDRGYNRNQNNQGGNWGGQRRDNRNQRNRNQRGHHKNQQQQQQQQVQTIDEE.

2 disordered regions span residues 1 to 38 (MSRFFANGSDSESESSEEEVQAPNFNKASAFQFSDDEE) and 155 to 181 (SRFREAPDQESEAEDEEAHVSDAGEAA). A compositionally biased stretch (acidic residues) spans 11 to 20 (SESESSEEEV). Residues 23–32 (PNFNKASAFQ) are compositionally biased toward polar residues. Ser34, Ser165, Ser175, and Ser184 each carry phosphoserine. Residues 162-171 (DQESEAEDEE) show a composition bias toward acidic residues. The span at 196-208 (APKIAKSAPAKSV) shows a compositional bias: low complexity. A disordered region spans residues 196-284 (APKIAKSAPA…KRAEDDEDGE (89 aa)). Positions 210-236 (ADDEDSDDSIDWDSDSESETESSEDEN) are enriched in acidic residues. The segment covering 241–271 (MRERFLKRSTEKGEDKGDDDKRKDKRKEQKL) has biased composition (basic and acidic residues). Positions 642–818 (FHMHINLELL…ETVVMHRSEP (177 aa)) constitute a PCI domain. The segment at 851–911 (FQRGNMGNRG…QQQVQTIDEE (61 aa)) is disordered. The span at 885–896 (QRNRNQRGHHKN) shows a compositional bias: basic residues. A compositionally biased stretch (low complexity) spans 897–911 (QQQQQQQQVQTIDEE).

This sequence belongs to the eIF-3 subunit C family. In terms of assembly, component of the eukaryotic translation initiation factor 3 (eIF-3) complex. The eIF-3 complex interacts with pix.

The protein localises to the cytoplasm. Functionally, component of the eukaryotic translation initiation factor 3 (eIF-3) complex, which is involved in protein synthesis of a specialized repertoire of mRNAs and, together with other initiation factors, stimulates binding of mRNA and methionyl-tRNAi to the 40S ribosome. The eIF-3 complex specifically targets and initiates translation of a subset of mRNAs involved in cell proliferation. The polypeptide is Eukaryotic translation initiation factor 3 subunit C (Drosophila pseudoobscura pseudoobscura (Fruit fly)).